Consider the following 420-residue polypeptide: Transcription factor IIIB 50 kDa subunit (420 aa).

Residues 3–36 (NGSRCPDCGSSELVEDSHYSQSQLVCSDCGCVVT) form a TFIIB-type zinc finger. 4 residues coordinate Zn(2+): C7, C10, C28, and C31. 2 repeat units span residues 72 to 157 (DLRR…MQMV) and 173 to 249 (VKSY…SLAQ). The interval 108 to 114 (AARLQKK) is interaction with target DNA. The segment at 316-387 (TAEVETQQQQ…AVTGDEDISD (72 aa)) is disordered. Residues 322-336 (QQQQQQQQGQGQGQQ) show a composition bias toward low complexity. S354 is modified (phosphoserine). The segment at 358–364 (LLPPCML) is required for the formation of a ternary complex with DNA and TBP; not required for interaction with TBP in the absence of DNA. A Cysteine sulfenic acid (-SOH) modification is found at C362. The interval 366-420 (PPKRTHTLPPESAVTGDEDISDSEIEQYLRTPQEVRDFERAQAASQAAMRVPNPP) is required for interaction with TBP and formation of a ternary complex with DNA and TBP.

The protein belongs to the TFIIB family. In terms of assembly, component of TFIIIB complexes. The TFIIIB complex has two activities, alpha and beta. The TFIIIB-alpha activity complex is composed of TBP, BDP1, and a complex containing both BRF2 and at least four stably associated proteins; this complex inhibits the transcription by pol III via its phosphorylation by CK2; YY1 facilitates the TFIIIB-alpha complex formation. Interacts with TBP; this interaction promotes recruitment of BRF2 to TATA box-containing promoters. Interacts with TBP and the BURE sequence (GC-rich sequence downstream from the TATA box) to form a strong ternary complex which is joined by BDP1; this ternary complex stimulates pol III transcription. Forms a trimeric complex composed of TBP, BRF2 and mini-SNAPc complex (SNAP43, SNAP50, and the N-terminal third of SNAP190) on the promoter. Assembly of the TBP-BRF2 complex is stimulated by SNAP190. Interacts with MAF1 and SNAPC4. Post-translationally, in response to oxidative stress, Cys-362 is reversibly oxidized to cysteine sulfenic acid. Oxidation of Cys-362 impairs formation of a ternary complex with TBP and DNA and down-regulates expression of target genes in response to oxidative stress.

The protein localises to the nucleus. In terms of biological role, general activator of RNA polymerase III transcription. Factor exclusively required for RNA polymerase III transcription of genes with promoter elements upstream of the initiation sites. Contributes to the regulation of gene expression; functions as activator in the absence of oxidative stress. Down-regulates expression of target genes in response to oxidative stress. Overexpression protects cells against apoptosis in response to oxidative stress. This chain is Transcription factor IIIB 50 kDa subunit (Brf2), found in Mus musculus (Mouse).